Consider the following 346-residue polypeptide: Holliday junction branch migration complex subunit RuvB (346 aa).

A large ATPase domain (RuvB-L) region spans residues 1-182 (MSEAARLIAP…FGIPVRLNFY (182 aa)). ATP-binding positions include Arg22, Gly63, Lys66, Thr67, Thr68, 129 to 131 (EDF), Arg172, Tyr182, and Arg219. Mg(2+) is bound at residue Thr67. Positions 183–253 (TVEELELIVR…IADEALTRLL (71 aa)) are small ATPAse domain (RuvB-S). The segment at 256 to 346 (SMGLDQLDRR…SQFRLTLEDD (91 aa)) is head domain (RuvB-H). DNA-binding residues include Arg292, Arg311, and Arg316.

The protein belongs to the RuvB family. Homohexamer. Forms an RuvA(8)-RuvB(12)-Holliday junction (HJ) complex. HJ DNA is sandwiched between 2 RuvA tetramers; dsDNA enters through RuvA and exits via RuvB. An RuvB hexamer assembles on each DNA strand where it exits the tetramer. Each RuvB hexamer is contacted by two RuvA subunits (via domain III) on 2 adjacent RuvB subunits; this complex drives branch migration. In the full resolvosome a probable DNA-RuvA(4)-RuvB(12)-RuvC(2) complex forms which resolves the HJ.

It localises to the cytoplasm. The enzyme catalyses ATP + H2O = ADP + phosphate + H(+). Its function is as follows. The RuvA-RuvB-RuvC complex processes Holliday junction (HJ) DNA during genetic recombination and DNA repair, while the RuvA-RuvB complex plays an important role in the rescue of blocked DNA replication forks via replication fork reversal (RFR). RuvA specifically binds to HJ cruciform DNA, conferring on it an open structure. The RuvB hexamer acts as an ATP-dependent pump, pulling dsDNA into and through the RuvAB complex. RuvB forms 2 homohexamers on either side of HJ DNA bound by 1 or 2 RuvA tetramers; 4 subunits per hexamer contact DNA at a time. Coordinated motions by a converter formed by DNA-disengaged RuvB subunits stimulates ATP hydrolysis and nucleotide exchange. Immobilization of the converter enables RuvB to convert the ATP-contained energy into a lever motion, pulling 2 nucleotides of DNA out of the RuvA tetramer per ATP hydrolyzed, thus driving DNA branch migration. The RuvB motors rotate together with the DNA substrate, which together with the progressing nucleotide cycle form the mechanistic basis for DNA recombination by continuous HJ branch migration. Branch migration allows RuvC to scan DNA until it finds its consensus sequence, where it cleaves and resolves cruciform DNA. The polypeptide is Holliday junction branch migration complex subunit RuvB (Rhizobium meliloti (strain 1021) (Ensifer meliloti)).